Here is a 434-residue protein sequence, read N- to C-terminus: Cytochrome c biogenesis protein CcsB (434 aa).

3 helical membrane-spanning segments follow: residues 15 to 35 (LRVA…GTAI), 73 to 93 (SNWF…CSLR), and 163 to 183 (VGPL…VVGA).

It belongs to the Ccs1/CcsB family. As to quaternary structure, may interact with CcsA.

The protein localises to the cellular thylakoid membrane. Its function is as follows. Required during biogenesis of c-type cytochromes (cytochrome c6 and cytochrome f) at the step of heme attachment. The chain is Cytochrome c biogenesis protein CcsB from Synechococcus sp. (strain RCC307).